A 161-amino-acid chain; its full sequence is Phosphopantetheine adenylyltransferase (161 aa).

Thr9 contacts substrate. ATP is bound by residues 9–10 (TF) and His17. The substrate site is built by Lys41, Leu73, and Arg87. ATP contacts are provided by residues 88–90 (GLR), Glu98, and 123–129 (LSYISST).

This sequence belongs to the bacterial CoaD family. In terms of assembly, homohexamer. The cofactor is Mg(2+).

It is found in the cytoplasm. It catalyses the reaction (R)-4'-phosphopantetheine + ATP + H(+) = 3'-dephospho-CoA + diphosphate. The protein operates within cofactor biosynthesis; coenzyme A biosynthesis; CoA from (R)-pantothenate: step 4/5. Its function is as follows. Reversibly transfers an adenylyl group from ATP to 4'-phosphopantetheine, yielding dephospho-CoA (dPCoA) and pyrophosphate. This Hahella chejuensis (strain KCTC 2396) protein is Phosphopantetheine adenylyltransferase.